Consider the following 294-residue polypeptide: HTH-type transcriptional regulator DgdR (294 aa).

Residues 14–70 (LEIDLLRSFVVIAEVRALSRAAARVGRTQSALSQQMKRLEDIVDQPLFQRTGRGVVL) form the HTH lysR-type domain. The H-T-H motif DNA-binding region spans 31–50 (LSRAAARVGRTQSALSQQMK).

The protein belongs to the LysR transcriptional regulatory family.

The chain is HTH-type transcriptional regulator DgdR (dgdR) from Burkholderia cepacia (Pseudomonas cepacia).